We begin with the raw amino-acid sequence, 471 residues long: Putative F-box protein At5g36200 (471 aa).

One can recognise an F-box domain in the interval M1–L46.

This is Putative F-box protein At5g36200 from Arabidopsis thaliana (Mouse-ear cress).